Here is a 186-residue protein sequence, read N- to C-terminus: GMP synthase [glutamine-hydrolyzing] subunit A (186 aa).

The Glutamine amidotransferase type-1 domain maps to 2–186 (SIVIINNFGQ…ENFNKICENY (185 aa)). Cysteine 76 (nucleophile) is an active-site residue. Catalysis depends on residues histidine 163 and glutamate 165.

As to quaternary structure, heterodimer composed of a glutamine amidotransferase subunit (A) and a GMP-binding subunit (B).

It carries out the reaction XMP + L-glutamine + ATP + H2O = GMP + L-glutamate + AMP + diphosphate + 2 H(+). It participates in purine metabolism; GMP biosynthesis; GMP from XMP (L-Gln route): step 1/1. Functionally, catalyzes the synthesis of GMP from XMP. This chain is GMP synthase [glutamine-hydrolyzing] subunit A, found in Methanosphaera stadtmanae (strain ATCC 43021 / DSM 3091 / JCM 11832 / MCB-3).